A 97-amino-acid polypeptide reads, in one-letter code: MAKNKLKGQKSRNVFHIASHKTFKAKNKAKPVTTNLKKINIMNHEKVNRMNRAFVNIQKELANFSKSLSLKSVQKELKHHENEPANVDEATRLMAQL.

Serine 19 carries the post-translational modification Phosphoserine. Lysine 21 bears the N6-acetyllysine mark. Serine 69 is subject to Phosphoserine.

Associates with the pre-60S ribosomal particles.

The protein resides in the nucleus. The protein localises to the nucleolus. In terms of biological role, trans-acting factor in ribosome biogenesis required for efficient 40S and 60S subunit production. This Mus musculus (Mouse) protein is Ribosomal biogenesis factor (Rbis).